A 469-amino-acid chain; its full sequence is UDP-N-acetylmuramate--L-alanine ligase (469 aa).

118–124 (GTHGKTT) serves as a coordination point for ATP.

This sequence belongs to the MurCDEF family.

It localises to the cytoplasm. It catalyses the reaction UDP-N-acetyl-alpha-D-muramate + L-alanine + ATP = UDP-N-acetyl-alpha-D-muramoyl-L-alanine + ADP + phosphate + H(+). The protein operates within cell wall biogenesis; peptidoglycan biosynthesis. Functionally, cell wall formation. The sequence is that of UDP-N-acetylmuramate--L-alanine ligase from Lachnoclostridium phytofermentans (strain ATCC 700394 / DSM 18823 / ISDg) (Clostridium phytofermentans).